The chain runs to 202 residues: Interleukin-17D (202 aa).

The signal sequence occupies residues 1-15 (MLVAGFLLALPPSWA). A disordered region spans residues 65-85 (QARNASCPAGGRPADRRFRPP). N-linked (GlcNAc...) asparagine glycosylation is found at N68 and N181.

The protein belongs to the IL-17 family. Expressed preferentially in adipose, skeletal muscle and CNS.

It localises to the secreted. In terms of biological role, induces expression of IL6, CXCL8/IL8, and CSF2/GM-CSF from endothelial cells. The protein is Interleukin-17D (IL17D) of Homo sapiens (Human).